Reading from the N-terminus, the 550-residue chain is Cochlin (550 aa).

Positions 1 to 24 are cleaved as a signal peptide; that stretch reads MSAAWIPALGLGVCLLLLPGPAGS. Residues 28-121 form the LCCL domain; it reads APIAITCFTR…QMLSRWSASF (94 aa). Cystine bridges form between C34–C50 and C54–C74. N100 is a glycosylation site (N-linked (GlcNAc...) asparagine). The span at 128-139 shows a compositional bias: polar residues; sequence SSTQEATGQAVS. The segment at 128–159 is disordered; it reads SSTQEATGQAVSTAHPPTGKRLKKTPEKKTGN. VWFA domains follow at residues 165-346 and 367-537; these read DIAF…VKPL and NIAF…VSDV. N221 carries an N-linked (GlcNAc...) asparagine glycan.

Monomer. May form homodimer. Interacts with type II collagen. Interacts with SLC44A2. Interacts with ANXA2. Post-translationally, N-glycosylated. A 50 kDa form is created by proteolytic cleavage. In terms of tissue distribution, expressed in inner ear structures; the cochlea and the vestibule.

It is found in the secreted. The protein resides in the extracellular space. The protein localises to the extracellular matrix. Its function is as follows. Plays a role in the control of cell shape and motility in the trabecular meshwork. This Homo sapiens (Human) protein is Cochlin (COCH).